Consider the following 729-residue polypeptide: Pentatricopeptide repeat-containing protein At5g01110 (729 aa).

The tract at residues 26–45 (TSSSPVFEPSSSSSSSSSSA) is disordered. Low complexity predominate over residues 27 to 45 (SSSPVFEPSSSSSSSSSSA). PPR repeat units lie at residues 112–147 (TSLS…GVSR), 164–198 (NDSV…GFTV), 199–233 (SIDA…GVGI), 234–268 (NVYT…GVYP), 269–303 (DIVT…GFSP), 304–338 (GVYT…GLSP), 339–373 (DSTT…DVVP), 374–408 (DLVC…GLIP), 409–443 (DNVI…GCAM), 444–478 (DVVT…ALFP), 479–513 (DSYT…RIRL), 514–548 (DVVT…EILP), 549–583 (TPIS…NIKP), 584–618 (TVMI…GFVP), 619–649 (DCIS…MEEE), 656–690 (DVFT…GVNP), and 691–725 (DRST…GFSP).

Belongs to the PPR family. P subfamily.

The protein is Pentatricopeptide repeat-containing protein At5g01110 of Arabidopsis thaliana (Mouse-ear cress).